The sequence spans 222 residues: 3-dehydroquinate dehydratase (222 aa).

3-dehydroquinate-binding positions include 32-34 (ELR) and arginine 64. The active-site Proton donor/acceptor is histidine 117. Lysine 143 functions as the Schiff-base intermediate with substrate in the catalytic mechanism. Arginine 181 provides a ligand contact to 3-dehydroquinate.

Belongs to the type-I 3-dehydroquinase family. Homodimer.

The catalysed reaction is 3-dehydroquinate = 3-dehydroshikimate + H2O. Its pathway is metabolic intermediate biosynthesis; chorismate biosynthesis; chorismate from D-erythrose 4-phosphate and phosphoenolpyruvate: step 3/7. In terms of biological role, involved in the third step of the chorismate pathway, which leads to the biosynthesis of aromatic amino acids. Catalyzes the cis-dehydration of 3-dehydroquinate (DHQ) and introduces the first double bond of the aromatic ring to yield 3-dehydroshikimate. This Aeropyrum pernix (strain ATCC 700893 / DSM 11879 / JCM 9820 / NBRC 100138 / K1) protein is 3-dehydroquinate dehydratase.